The chain runs to 122 residues: uncharacterized protein (122 aa).

2 consecutive transmembrane segments (helical) span residues 14-34 (WLWI…FNNV) and 83-103 (IIGV…YFII).

Its subcellular location is the cell membrane. This is an uncharacterized protein from Ureaplasma parvum serovar 3 (strain ATCC 700970).